The primary structure comprises 322 residues: Beta-ketoacyl-[acyl-carrier-protein] synthase III (322 aa).

Residues Cys-112 and His-249 contribute to the active site. The segment at Gln-250 to Arg-254 is ACP-binding. The active site involves Asn-279.

It belongs to the thiolase-like superfamily. FabH family. As to quaternary structure, homodimer.

The protein resides in the cytoplasm. The enzyme catalyses malonyl-[ACP] + acetyl-CoA + H(+) = 3-oxobutanoyl-[ACP] + CO2 + CoA. It participates in lipid metabolism; fatty acid biosynthesis. Functionally, catalyzes the condensation reaction of fatty acid synthesis by the addition to an acyl acceptor of two carbons from malonyl-ACP. Catalyzes the first condensation reaction which initiates fatty acid synthesis and may therefore play a role in governing the total rate of fatty acid production. Possesses both acetoacetyl-ACP synthase and acetyl transacylase activities. Its substrate specificity determines the biosynthesis of branched-chain and/or straight-chain of fatty acids. This is Beta-ketoacyl-[acyl-carrier-protein] synthase III from Caulobacter vibrioides (strain ATCC 19089 / CIP 103742 / CB 15) (Caulobacter crescentus).